A 319-amino-acid chain; its full sequence is Acetyl-coenzyme A carboxylase carboxyl transferase subunit alpha (319 aa).

The region spanning 35-296 (DLEKEIKQLE…KQRLLEQLKE (262 aa)) is the CoA carboxyltransferase C-terminal domain.

It belongs to the AccA family. As to quaternary structure, acetyl-CoA carboxylase is a heterohexamer composed of biotin carboxyl carrier protein (AccB), biotin carboxylase (AccC) and two subunits each of ACCase subunit alpha (AccA) and ACCase subunit beta (AccD).

The protein resides in the cytoplasm. It carries out the reaction N(6)-carboxybiotinyl-L-lysyl-[protein] + acetyl-CoA = N(6)-biotinyl-L-lysyl-[protein] + malonyl-CoA. Its pathway is lipid metabolism; malonyl-CoA biosynthesis; malonyl-CoA from acetyl-CoA: step 1/1. In terms of biological role, component of the acetyl coenzyme A carboxylase (ACC) complex. First, biotin carboxylase catalyzes the carboxylation of biotin on its carrier protein (BCCP) and then the CO(2) group is transferred by the carboxyltransferase to acetyl-CoA to form malonyl-CoA. The chain is Acetyl-coenzyme A carboxylase carboxyl transferase subunit alpha from Aliivibrio fischeri (strain MJ11) (Vibrio fischeri).